A 329-amino-acid chain; its full sequence is 4-hydroxy-3-methylbut-2-enyl diphosphate reductase 1 (329 aa).

Cys-29 is a [4Fe-4S] cluster binding site. The (2E)-4-hydroxy-3-methylbut-2-enyl diphosphate site is built by His-58 and His-95. Residues His-58 and His-95 each coordinate dimethylallyl diphosphate. Isopentenyl diphosphate-binding residues include His-58 and His-95. Cys-117 is a [4Fe-4S] cluster binding site. His-145 provides a ligand contact to (2E)-4-hydroxy-3-methylbut-2-enyl diphosphate. A dimethylallyl diphosphate-binding site is contributed by His-145. His-145 is an isopentenyl diphosphate binding site. The Proton donor role is filled by Glu-147. Thr-185 lines the (2E)-4-hydroxy-3-methylbut-2-enyl diphosphate pocket. Cys-215 is a [4Fe-4S] cluster binding site. 4 residues coordinate (2E)-4-hydroxy-3-methylbut-2-enyl diphosphate: Ser-243, Ser-244, Asn-245, and Ser-287. The dimethylallyl diphosphate site is built by Ser-243, Ser-244, Asn-245, and Ser-287. 4 residues coordinate isopentenyl diphosphate: Ser-243, Ser-244, Asn-245, and Ser-287.

Belongs to the IspH family. The cofactor is [4Fe-4S] cluster.

The enzyme catalyses isopentenyl diphosphate + 2 oxidized [2Fe-2S]-[ferredoxin] + H2O = (2E)-4-hydroxy-3-methylbut-2-enyl diphosphate + 2 reduced [2Fe-2S]-[ferredoxin] + 2 H(+). It carries out the reaction dimethylallyl diphosphate + 2 oxidized [2Fe-2S]-[ferredoxin] + H2O = (2E)-4-hydroxy-3-methylbut-2-enyl diphosphate + 2 reduced [2Fe-2S]-[ferredoxin] + 2 H(+). The protein operates within isoprenoid biosynthesis; dimethylallyl diphosphate biosynthesis; dimethylallyl diphosphate from (2E)-4-hydroxy-3-methylbutenyl diphosphate: step 1/1. It participates in isoprenoid biosynthesis; isopentenyl diphosphate biosynthesis via DXP pathway; isopentenyl diphosphate from 1-deoxy-D-xylulose 5-phosphate: step 6/6. In terms of biological role, catalyzes the conversion of 1-hydroxy-2-methyl-2-(E)-butenyl 4-diphosphate (HMBPP) into a mixture of isopentenyl diphosphate (IPP) and dimethylallyl diphosphate (DMAPP). Acts in the terminal step of the DOXP/MEP pathway for isoprenoid precursor biosynthesis. This Mycobacterium tuberculosis (strain CDC 1551 / Oshkosh) protein is 4-hydroxy-3-methylbut-2-enyl diphosphate reductase 1.